Here is a 231-residue protein sequence, read N- to C-terminus: NADH-ubiquinone oxidoreductase chain 4 (231 aa).

The next 6 membrane-spanning stretches (helical) occupy residues 1 to 21, 34 to 54, 63 to 85, 89 to 111, 128 to 148, and 156 to 176; these read PIAG…YGII, MFLP…LTCL, IAYS…TPWG, AMAL…NTTY, ILPM…AVPP, and LLIM…LGLS.

It belongs to the complex I subunit 4 family.

Its subcellular location is the mitochondrion membrane. It carries out the reaction a ubiquinone + NADH + 5 H(+)(in) = a ubiquinol + NAD(+) + 4 H(+)(out). Its function is as follows. Core subunit of the mitochondrial membrane respiratory chain NADH dehydrogenase (Complex I) that is believed to belong to the minimal assembly required for catalysis. Complex I functions in the transfer of electrons from NADH to the respiratory chain. The immediate electron acceptor for the enzyme is believed to be ubiquinone. This chain is NADH-ubiquinone oxidoreductase chain 4 (MT-ND4), found in Agkistrodon contortrix contortrix (Southern copperhead).